The primary structure comprises 461 residues: MEKKASILMNRYELGRMLGQGTFAKVYHARNLASNQSVAIKVIDKEKVLRVGMIDQIKREISIMRLVRHPNIVQLHEVMASKSKIYFAMEYVRGGELFSRVARGRLKEDAARKYFQQLIGAVDFCHSRGVYHRDLKPENLLVDENGNLKVSDFGLSAFKECQKQDGLLHTTCGTPAYVAPEIINKRGYDGAKADIWSCGVILFVLLAGYLPFHDSNLMEMYRKISKGDVKFPQWFTTDVRRLLSRLLDPNPNIRITVEKLVEHPWFKKGYKPAVMLSQPNESNNLKDVHTAFSADHKDNEGKAKEPASSLKPVSLNAFDIISLSKGFDLSGLFENDKEQKADSRFMTQKPASAIVSKLEQIAETESFKVKKQDGLVKLQGSKEGRKGQLAIDAEIFEVTPSFFVVEVKKSAGDTLEYEKFCNKGLRPSLRDICWDGQSEHPSLAQSSTLTQSSKSISRHAI.

The Protein kinase domain maps to 12 to 266 (YELGRMLGQG…VEKLVEHPWF (255 aa)). ATP contacts are provided by residues 18-26 (LGQGTFAKV) and Lys41. The active-site Proton acceptor is the Asp134. The interval 152 to 181 (DFGLSAFKECQKQDGLLHTTCGTPAYVAPE) is activation loop. The 35-residue stretch at 300-334 (EGKAKEPASSLKPVSLNAFDIISLSKGFDLSGLFE) folds into the NAF domain. Residues 340 to 369 (KADSRFMTQKPASAIVSKLEQIAETESFKV) are PPI. The interval 440–461 (HPSLAQSSTLTQSSKSISRHAI) is disordered. A compositionally biased stretch (low complexity) spans 442–455 (SLAQSSTLTQSSKS).

Belongs to the protein kinase superfamily. CAMK Ser/Thr protein kinase family. SNF1 subfamily. Mn(2+) serves as cofactor.

It catalyses the reaction L-seryl-[protein] + ATP = O-phospho-L-seryl-[protein] + ADP + H(+). The catalysed reaction is L-threonyl-[protein] + ATP = O-phospho-L-threonyl-[protein] + ADP + H(+). In terms of biological role, CIPK serine-threonine protein kinases interact with CBL proteins. Binding of a CBL protein to the regulatory NAF domain of CIPK protein lead to the activation of the kinase in a calcium-dependent manner. This Oryza sativa subsp. japonica (Rice) protein is CBL-interacting protein kinase 5 (CIPK5).